Here is a 253-residue protein sequence, read N- to C-terminus: Prolactin-7A2 (253 aa).

An N-terminal signal peptide occupies residues 1-30; it reads MSFSFSQPCPSGALLLVVVSSLLLWENVAS. Residues Asn36, Asn103, and Asn135 are each glycosylated (N-linked (GlcNAc...) asparagine). 2 disulfides stabilise this stretch: Cys101-Cys218 and Cys235-Cys244.

It belongs to the somatotropin/prolactin family. Expression restricted to the placental tissue. Expressed only in the spongiotrophoblasts.

The protein resides in the secreted. The sequence is that of Prolactin-7A2 (Prl7a2) from Mus musculus (Mouse).